We begin with the raw amino-acid sequence, 393 residues long: Flavohemoprotein (393 aa).

Positions 1 to 139 constitute a Globin domain; sequence MLSAEHRAIV…LADLLIGLEE (139 aa). Residue His-85 coordinates heme b. Catalysis depends on charge relay system residues Tyr-95 and Glu-138. The tract at residues 150 to 393 is reductase; that stretch reads GGWRGTRAFV…EFFGPASALD (244 aa). In terms of domain architecture, FAD-binding FR-type spans 153 to 256; sequence RGTRAFVVAR…LTPSGDFTLE (104 aa). FAD is bound by residues Tyr-191 and 205–208; that span reads RNYS. NADP(+) is bound at residue 268–273; that stretch reads GVGITP. An FAD-binding site is contributed by 385-388; sequence FFGP.

The protein belongs to the globin family. Two-domain flavohemoproteins subfamily. In the C-terminal section; belongs to the flavoprotein pyridine nucleotide cytochrome reductase family. Heme b serves as cofactor. FAD is required as a cofactor.

The enzyme catalyses 2 nitric oxide + NADPH + 2 O2 = 2 nitrate + NADP(+) + H(+). It carries out the reaction 2 nitric oxide + NADH + 2 O2 = 2 nitrate + NAD(+) + H(+). In terms of biological role, is involved in NO detoxification in an aerobic process, termed nitric oxide dioxygenase (NOD) reaction that utilizes O(2) and NAD(P)H to convert NO to nitrate, which protects the bacterium from various noxious nitrogen compounds. Therefore, plays a central role in the inducible response to nitrosative stress. The sequence is that of Flavohemoprotein from Burkholderia sp. (strain TH2).